We begin with the raw amino-acid sequence, 161 residues long: Phosphopantetheine adenylyltransferase (161 aa).

Thr11 provides a ligand contact to substrate. Residues 11–12 (TF) and His19 contribute to the ATP site. Substrate is bound by residues Lys43, Thr75, and Arg89. ATP-binding positions include 90-92 (GLR), Glu100, and 125-131 (YSFLSSS).

Belongs to the bacterial CoaD family. In terms of assembly, homohexamer. Mg(2+) is required as a cofactor.

It is found in the cytoplasm. It carries out the reaction (R)-4'-phosphopantetheine + ATP + H(+) = 3'-dephospho-CoA + diphosphate. It participates in cofactor biosynthesis; coenzyme A biosynthesis; CoA from (R)-pantothenate: step 4/5. In terms of biological role, reversibly transfers an adenylyl group from ATP to 4'-phosphopantetheine, yielding dephospho-CoA (dPCoA) and pyrophosphate. This chain is Phosphopantetheine adenylyltransferase, found in Listeria welshimeri serovar 6b (strain ATCC 35897 / DSM 20650 / CCUG 15529 / CIP 8149 / NCTC 11857 / SLCC 5334 / V8).